The following is a 356-amino-acid chain: Heparan sulfate 2-O-sulfotransferase 1 (356 aa).

Over 1–11 (MGLLRIMMPPK) the chain is Cytoplasmic. A helical; Signal-anchor for type II membrane protein membrane pass occupies residues 12–28 (LQLLAVLTFGVLMLFLE). Residues 24–51 (MLFLENQIQNLEESREKLERAIARHEVR) are a coiled coil. Topologically, residues 29 to 356 (NQIQNLEESR…FYEKIYPKSN (328 aa)) are lumenal. Residues Lys-83, Thr-84, Ala-85, Ser-86, Thr-87, and Ser-88 each contribute to the adenosine 3',5'-bisphosphate site. 2 N-linked (GlcNAc...) asparagine glycosylation sites follow: Asn-108 and Asn-127. Active-site residues include His-140 and His-142. Arg-164 and Ser-172 together coordinate adenosine 3',5'-bisphosphate. Cystine bridges form between Cys-201-Cys-209 and Cys-222-Cys-228. Residues Tyr-279, Ser-285, Thr-290, and Lys-293 each contribute to the adenosine 3',5'-bisphosphate site.

It belongs to the sulfotransferase 3 family. Homotrimer.

Its subcellular location is the golgi apparatus membrane. Catalyzes the transfer of a sulfo group from 3'-phospho-5'-adenylyl sulfate (PAPS) to the 2-OH position of iduronic acid (IdoA) or glucuronic acid (GlcA) within the heparan sulfate (HS) chain and participates in HS biosynthesis. In Xenopus laevis (African clawed frog), this protein is Heparan sulfate 2-O-sulfotransferase 1.